Reading from the N-terminus, the 343-residue chain is Serine/threonine-protein kinase SRK2C (343 aa).

A Protein kinase domain is found at 4-260 (YEIVKDIGSG…IEEIKNHSWF (257 aa)). Residues 10–18 (IGSGNFGVA) and K33 contribute to the ATP site. D123 functions as the Proton acceptor in the catalytic mechanism. T158 is subject to Phosphothreonine.

The protein belongs to the protein kinase superfamily. Ser/Thr protein kinase family. In terms of assembly, interacts with I-2 and TOPP1. Expressed in seedlings.

The enzyme catalyses L-seryl-[protein] + ATP = O-phospho-L-seryl-[protein] + ADP + H(+). It catalyses the reaction L-threonyl-[protein] + ATP = O-phospho-L-threonyl-[protein] + ADP + H(+). In terms of biological role, involved in gene regulation and confers tolerance to drought and osmotic stress. This Arabidopsis thaliana (Mouse-ear cress) protein is Serine/threonine-protein kinase SRK2C (SRK2C).